The primary structure comprises 504 residues: Maturase K (504 aa).

This sequence belongs to the intron maturase 2 family. MatK subfamily.

It localises to the plastid. The protein resides in the chloroplast. Its function is as follows. Usually encoded in the trnK tRNA gene intron. Probably assists in splicing its own and other chloroplast group II introns. The polypeptide is Maturase K (Amaranthus caudatus (Love-lies-bleeding)).